We begin with the raw amino-acid sequence, 361 residues long: 3-dehydroquinate synthase (361 aa).

NAD(+) is bound by residues 70–75, 104–108, 128–129, Lys141, and Lys150; these read DGEQHK, GVVGD, and TT. 3 residues coordinate Zn(2+): Glu183, His246, and His263.

This sequence belongs to the sugar phosphate cyclases superfamily. Dehydroquinate synthase family. The cofactor is Co(2+). Zn(2+) serves as cofactor. It depends on NAD(+) as a cofactor.

It is found in the cytoplasm. The enzyme catalyses 7-phospho-2-dehydro-3-deoxy-D-arabino-heptonate = 3-dehydroquinate + phosphate. It participates in metabolic intermediate biosynthesis; chorismate biosynthesis; chorismate from D-erythrose 4-phosphate and phosphoenolpyruvate: step 2/7. Its function is as follows. Catalyzes the conversion of 3-deoxy-D-arabino-heptulosonate 7-phosphate (DAHP) to dehydroquinate (DHQ). This is 3-dehydroquinate synthase from Teredinibacter turnerae (strain ATCC 39867 / T7901).